A 292-amino-acid chain; its full sequence is AKT-interacting protein homolog B (292 aa).

Positions 1 to 44 are disordered; the sequence is MNPFWNMPSASVRKRSDNDEKIATADQKISPARSSSAKKQLPSI. A compositionally biased stretch (basic and acidic residues) spans 14-23; the sequence is KRSDNDEKIA. The UBC core domain maps to 75–223; sequence YLEYSLLAEF…VVDSVKLCNS (149 aa).

Belongs to the ubiquitin-conjugating enzyme family. FTS subfamily.

It localises to the cytoplasm. The protein resides in the cell membrane. Functionally, may function to promote vesicle trafficking and/or fusion. May also regulate apoptosis. The polypeptide is AKT-interacting protein homolog B (aktip-b) (Xenopus laevis (African clawed frog)).